We begin with the raw amino-acid sequence, 242 residues long: AA9 family lytic polysaccharide monooxygenase F (242 aa).

The first 20 residues, 1 to 20 (MVQFKLSTASLLALASYAAA), serve as a signal peptide directing secretion. H21 lines the Cu(2+) pocket. Residues 31–53 (GQTYPGADPHNPNPESPGWQAEN) form a disordered region. Intrachain disulfides connect C71/C192 and C112/C116. Residue H101 coordinates Cu(2+). O2 is bound by residues H178 and Q187. Y189 serves as a coordination point for Cu(2+).

This sequence belongs to the polysaccharide monooxygenase AA9 family. It depends on Cu(2+) as a cofactor.

The protein localises to the secreted. The enzyme catalyses [(1-&gt;4)-beta-D-glucosyl]n+m + reduced acceptor + O2 = 4-dehydro-beta-D-glucosyl-[(1-&gt;4)-beta-D-glucosyl]n-1 + [(1-&gt;4)-beta-D-glucosyl]m + acceptor + H2O.. In terms of biological role, lytic polysaccharide monooxygenase (LPMO) that depolymerizes crystalline and amorphous polysaccharides via the oxidation of scissile alpha- or beta-(1-4)-glycosidic bonds, yielding C1 or C4 oxidation products. Catalysis by LPMOs requires the reduction of the active-site copper from Cu(II) to Cu(I) by a reducing agent and H(2)O(2) or O(2) as a cosubstrate. Active on hemicelluloses, including xylan, glucomannan, and xyloglucan. Shows clear activity on cellooligosaccharides, generating C4 oxidation products. Has no activity on ivory nut mannan (INM), a linear beta-1,4-linked mannan without substitutions. This is AA9 family lytic polysaccharide monooxygenase F from Malbranchea cinnamomea (Thermophilic fungus).